Reading from the N-terminus, the 344-residue chain is Glyceraldehyde-3-phosphate dehydrogenase (344 aa).

NAD(+) contacts are provided by residues 11–12 (TI) and Gly110. 139 to 141 (SCN) is a D-glyceraldehyde 3-phosphate binding site. The active-site Nucleophile is Cys140. Arg169 is an NAD(+) binding site. 195–196 (HG) is a binding site for D-glyceraldehyde 3-phosphate. Residue Gln302 participates in NAD(+) binding.

Belongs to the glyceraldehyde-3-phosphate dehydrogenase family. Homotetramer.

The protein localises to the cytoplasm. It carries out the reaction D-glyceraldehyde 3-phosphate + phosphate + NADP(+) = (2R)-3-phospho-glyceroyl phosphate + NADPH + H(+). The enzyme catalyses D-glyceraldehyde 3-phosphate + phosphate + NAD(+) = (2R)-3-phospho-glyceroyl phosphate + NADH + H(+). Its pathway is carbohydrate degradation; glycolysis; pyruvate from D-glyceraldehyde 3-phosphate: step 1/5. The chain is Glyceraldehyde-3-phosphate dehydrogenase from Pyrobaculum calidifontis (strain DSM 21063 / JCM 11548 / VA1).